A 75-amino-acid chain; its full sequence is DNA-directed RNA polymerase subunit omega (75 aa).

This sequence belongs to the RNA polymerase subunit omega family. As to quaternary structure, in cyanobacteria the RNAP catalytic core is composed of 2 alpha, 1 beta, 1 beta', 1 gamma and 1 omega subunit. When a sigma factor is associated with the core the holoenzyme is formed, which can initiate transcription.

The catalysed reaction is RNA(n) + a ribonucleoside 5'-triphosphate = RNA(n+1) + diphosphate. In terms of biological role, promotes RNA polymerase assembly. Latches the N- and C-terminal regions of the beta' subunit thereby facilitating its interaction with the beta and alpha subunits. The sequence is that of DNA-directed RNA polymerase subunit omega from Picosynechococcus sp. (strain ATCC 27264 / PCC 7002 / PR-6) (Agmenellum quadruplicatum).